Here is a 143-residue protein sequence, read N- to C-terminus: ATP synthase epsilon chain (143 aa).

This sequence belongs to the ATPase epsilon chain family. In terms of assembly, F-type ATPases have 2 components, CF(1) - the catalytic core - and CF(0) - the membrane proton channel. CF(1) has five subunits: alpha(3), beta(3), gamma(1), delta(1), epsilon(1). CF(0) has three main subunits: a, b and c.

The protein localises to the cell inner membrane. Functionally, produces ATP from ADP in the presence of a proton gradient across the membrane. The sequence is that of ATP synthase epsilon chain from Dichelobacter nodosus (strain VCS1703A).